Reading from the N-terminus, the 128-residue chain is Histone H2A.2 (128 aa).

This sequence belongs to the histone H2A family. The nucleosome is a histone octamer containing two molecules each of H2A, H2B, H3 and H4 assembled in one H3-H4 heterotetramer and two H2A-H2B heterodimers. The octamer wraps approximately 147 bp of DNA. As to expression, expressed in the generative cell within the bicellular pollen. Not detected in other reproductive or vegetative tissues.

The protein resides in the nucleus. The protein localises to the chromosome. In terms of biological role, core component of nucleosome. Nucleosomes wrap and compact DNA into chromatin, limiting DNA accessibility to the cellular machineries which require DNA as a template. Histones thereby play a central role in transcription regulation, DNA repair, DNA replication and chromosomal stability. DNA accessibility is regulated via a complex set of post-translational modifications of histones, also called histone code, and nucleosome remodeling. May be involved in the repression of gene expression in male gametes. The sequence is that of Histone H2A.2 (gH2A) from Lilium longiflorum (Trumpet lily).